Reading from the N-terminus, the 486-residue chain is Elastin-binding protein EbpS (486 aa).

A compositionally biased stretch (basic and acidic residues) spans methionine 1 to threonine 40. The tract at residues methionine 1 to lysine 314 is disordered. The Extracellular segment spans residues serine 2–lysine 204. The segment at glutamine 14–glutamate 34 is elastin-binding. Over residues threonine 64–alanine 85 the composition is skewed to polar residues. Basic and acidic residues-rich tracts occupy residues glutamate 103–tyrosine 117, aspartate 126–alanine 160, and serine 180–histidine 199. Low complexity predominate over residues lysine 204 to serine 225. The helical transmembrane segment at glycine 205–serine 225 threads the bilayer. Over lysine 226–lysine 319 the chain is Cytoplasmic. The span at aspartate 233–serine 246 shows a compositional bias: polar residues. A compositionally biased stretch (basic and acidic residues) spans threonine 247–histidine 259. Residues glycine 278–serine 297 are compositionally biased toward low complexity. Residues asparagine 300–lysine 314 show a composition bias toward basic and acidic residues. The chain crosses the membrane as a helical span at residues valine 320–methionine 340. Over alanine 341 to proline 486 the chain is Extracellular. Residues glutamate 351–threonine 440 are disordered. Basic and acidic residues predominate over residues asparagine 361–glutamate 398. Residues glutamine 403–glutamine 431 show a composition bias toward low complexity. The 49-residue stretch at glutamine 437 to isoleucine 485 folds into the LysM domain.

It is found in the cell membrane. Promotes binding of soluble elastin peptides and tropoelastin to S.aureus cells although it is not able to promote bacterial adherence to immobilized elastin and, therefore, is not a microbial surface component recognizing adhesive matrix molecule (MSCRAMM). In Staphylococcus aureus (strain MRSA252), this protein is Elastin-binding protein EbpS (ebpS).